We begin with the raw amino-acid sequence, 570 residues long: Protein NRT1/ PTR FAMILY 8.2 (570 aa).

Threonine 99 bears the Phosphothreonine mark. 10 helical membrane-spanning segments follow: residues 100-120 (IASF…SASV), 136-156 (AGQT…TGGI), 182-202 (FFNW…SVLV), 210-230 (WGWG…FFFA), 335-355 (IWAT…VFVL), 370-390 (IPSA…APVY), 414-434 (IGIG…LEVA), 454-474 (IFWQ…TFIG), 493-513 (ALSL…VTLV), and 537-557 (YFFW…LWIA).

This sequence belongs to the major facilitator superfamily. Proton-dependent oligopeptide transporter (POT/PTR) (TC 2.A.17) family. In terms of tissue distribution, expressed in developing and germinating pollen grains and ovules.

Its subcellular location is the cell membrane. Its function is as follows. Peptide transporter. Mediates the transport of di- and tripeptides. High affinity transporter. Involved in the uptake of peptides during pollen germination and tube growth. This Arabidopsis thaliana (Mouse-ear cress) protein is Protein NRT1/ PTR FAMILY 8.2 (NPF8.2).